Reading from the N-terminus, the 524-residue chain is Bifunctional NAD(P)H-hydrate repair enzyme Nnr (524 aa).

The segment at 1-219 (MKVARVSEIK…ISYPRALLED (219 aa)) is NAD(P)H-hydrate epimerase. The YjeF N-terminal domain occupies 9–218 (IKLLDREAAE…HISYPRALLE (210 aa)). Residues 57–61 (NNGGD) are NADPHX 1; for epimerase activity. K(+) is bound by residues asparagine 58 and aspartate 128. Positions 132–138 (GTGLSRP) are NADPHX 1; for epimerase activity. Positions 143 and 161 each coordinate (6S)-NADPHX. Serine 164 serves as a coordination point for K(+). Positions 224–507 (VETNDPVPLP…NYLPKALRAL (284 aa)) constitute a YjeF C-terminal domain. The segment at 224-524 (VETNDPVPLP…LERYTIKVLP (301 aa)) is ADP-dependent (S)-NAD(P)H-hydrate dehydratase. A (6S)-NADPHX-binding site is contributed by glycine 330. The NADPHX 2; for dehydratase activity stretch occupies residues 381–387 (HAGEMSR). ADP-binding positions include 418–422 (KGAHT) and 438–447 (NPGMATAGSG). Aspartate 448 lines the (6S)-NADPHX pocket.

The protein in the N-terminal section; belongs to the NnrE/AIBP family. In the C-terminal section; belongs to the NnrD/CARKD family. It depends on K(+) as a cofactor.

It carries out the reaction (6S)-NADHX + ADP = AMP + phosphate + NADH + H(+). The catalysed reaction is (6S)-NADPHX + ADP = AMP + phosphate + NADPH + H(+). The enzyme catalyses (6R)-NADHX = (6S)-NADHX. It catalyses the reaction (6R)-NADPHX = (6S)-NADPHX. Bifunctional enzyme that catalyzes the epimerization of the S- and R-forms of NAD(P)HX and the dehydration of the S-form of NAD(P)HX at the expense of ADP, which is converted to AMP. This allows the repair of both epimers of NAD(P)HX, a damaged form of NAD(P)H that is a result of enzymatic or heat-dependent hydration. The chain is Bifunctional NAD(P)H-hydrate repair enzyme Nnr (nnr) from Thermofilum pendens (strain DSM 2475 / Hrk 5).